The chain runs to 396 residues: Penicillopepsin-1 (396 aa).

A signal peptide spans 1–20 (MVVFSKVTASLACFSAVVSA). Positions 21–72 (AAVPVKSPRQGFSVNQVQKTVTGTRTVNLPGVYANALAKYGATVPANVHAAA) are cleaved as a propeptide — activation peptide. The 306-residue stretch at 88–393 (YLTPVKIGES…DAEGPRLGFA (306 aa)) folds into the Peptidase A1 domain. Active-site residues include aspartate 104 and aspartate 285. Asparagine 311 carries an N-linked (GlcNAc...) asparagine glycan. The cysteines at positions 321 and 356 are disulfide-linked.

Belongs to the peptidase A1 family. Monomer.

It is found in the secreted. The enzyme catalyses Hydrolysis of proteins with broad specificity similar to that of pepsin A, preferring hydrophobic residues at P1 and P1', but also cleaving 20-Gly-|-Glu-21 in the B chain of insulin. Clots milk, and activates trypsinogen.. Its function is as follows. Secreted aspartic endopeptidase that allows assimilation of proteinaceous substrates. The scissile peptide bond is attacked by a nucleophilic water molecule activated by two aspartic residues in the active site. Shows a broad primary substrate specificity. Favors hydrophobic residues at the P1 and P1' positions, but can also activate trypsinogen and hydrolyze the B chain of insulin between positions 'Gly-20' and 'Glu-21'. The chain is Penicillopepsin-1 (pepA) from Penicillium rubens (strain ATCC 28089 / DSM 1075 / NRRL 1951 / Wisconsin 54-1255) (Penicillium chrysogenum).